Reading from the N-terminus, the 206-residue chain is Proteasome subunit beta 1 (206 aa).

A propeptide spans 1-14 (removed in mature form; by autocatalysis); the sequence is MSRIHNDPKVLLTG. Threonine 15 serves as the catalytic Nucleophile.

Belongs to the peptidase T1B family. The 20S proteasome core is composed of 14 alpha and 14 beta subunits that assemble into four stacked heptameric rings, resulting in a barrel-shaped structure. The two inner rings, each composed of seven catalytic beta subunits, are sandwiched by two outer rings, each composed of seven alpha subunits. The catalytic chamber with the active sites is on the inside of the barrel. Has a gated structure, the ends of the cylinder being occluded by the N-termini of the alpha-subunits. Is capped at one or both ends by the proteasome regulatory ATPase, PAN.

It is found in the cytoplasm. It catalyses the reaction Cleavage of peptide bonds with very broad specificity.. The formation of the proteasomal ATPase PAN-20S proteasome complex, via the docking of the C-termini of PAN into the intersubunit pockets in the alpha-rings, triggers opening of the gate for substrate entry. Interconversion between the open-gate and close-gate conformations leads to a dynamic regulation of the 20S proteasome proteolysis activity. Functionally, component of the proteasome core, a large protease complex with broad specificity involved in protein degradation. The polypeptide is Proteasome subunit beta 1 (Caldivirga maquilingensis (strain ATCC 700844 / DSM 13496 / JCM 10307 / IC-167)).